Reading from the N-terminus, the 295-residue chain is Small ribosomal subunit protein uS2 (295 aa).

The protein belongs to the universal ribosomal protein uS2 family. As to quaternary structure, component of the small ribosomal subunit. Mature ribosomes consist of a small (40S) and a large (60S) subunit. The 40S subunit contains about 33 different proteins and 1 molecule of RNA (18S). The 60S subunit contains about 49 different proteins and 3 molecules of RNA (25S, 5.8S and 5S). Interacts with RPS21.

It localises to the cytoplasm. Required for the assembly and/or stability of the 40S ribosomal subunit. Required for the processing of the 20S rRNA-precursor to mature 18S rRNA in a late step of the maturation of 40S ribosomal subunits. This chain is Small ribosomal subunit protein uS2, found in Paracoccidioides brasiliensis (strain Pb03).